A 364-amino-acid chain; its full sequence is CCA-adding enzyme (364 aa).

Residues Gly19 and Arg22 each contribute to the ATP site. Gly19 and Arg22 together coordinate CTP. Asp32 and Asp34 together coordinate Mg(2+). ATP contacts are provided by Arg102, Arg148, and Arg151. The CTP site is built by Arg102, Arg148, and Arg151.

This sequence belongs to the tRNA nucleotidyltransferase/poly(A) polymerase family. Bacterial CCA-adding enzyme type 2 subfamily. Mg(2+) serves as cofactor.

It catalyses the reaction a tRNA precursor + 2 CTP + ATP = a tRNA with a 3' CCA end + 3 diphosphate. The enzyme catalyses a tRNA with a 3' CCA end + 2 CTP + ATP = a tRNA with a 3' CCACCA end + 3 diphosphate. Catalyzes the addition and repair of the essential 3'-terminal CCA sequence in tRNAs without using a nucleic acid template. Adds these three nucleotides in the order of C, C, and A to the tRNA nucleotide-73, using CTP and ATP as substrates and producing inorganic pyrophosphate. tRNA 3'-terminal CCA addition is required both for tRNA processing and repair. Also involved in tRNA surveillance by mediating tandem CCA addition to generate a CCACCA at the 3' terminus of unstable tRNAs. While stable tRNAs receive only 3'-terminal CCA, unstable tRNAs are marked with CCACCA and rapidly degraded. The sequence is that of CCA-adding enzyme from Bordetella bronchiseptica (strain ATCC BAA-588 / NCTC 13252 / RB50) (Alcaligenes bronchisepticus).